The chain runs to 317 residues: Putative carboxypeptidase RP402 (317 aa).

S125 acts as the Nucleophile in catalysis. Catalysis depends on charge relay system residues E225 and H288.

Belongs to the peptidase S66 family.

The polypeptide is Putative carboxypeptidase RP402 (Rickettsia prowazekii (strain Madrid E)).